The primary structure comprises 172 residues: Translation initiation factor IF-3 (172 aa).

Belongs to the IF-3 family. Monomer.

Its subcellular location is the cytoplasm. In terms of biological role, IF-3 binds to the 30S ribosomal subunit and shifts the equilibrium between 70S ribosomes and their 50S and 30S subunits in favor of the free subunits, thus enhancing the availability of 30S subunits on which protein synthesis initiation begins. This is Translation initiation factor IF-3 from Thermotoga maritima (strain ATCC 43589 / DSM 3109 / JCM 10099 / NBRC 100826 / MSB8).